Reading from the N-terminus, the 202-residue chain is Odorant-binding protein 59a (202 aa).

A signal peptide spans 1–20 (MKQLIFLLICLSCGTCSIYA). Basic and acidic residues predominate over residues 43–53 (HRQDEDEDRGR). A disordered region spans residues 43 to 105 (HRQDEDEDRG…QSDGRNHTSN (63 aa)). The span at 54-65 (GGQGRQGNGYEY) shows a compositional bias: gly residues.

Belongs to the PBP/GOBP family. As to expression, expressed in non-neuronal cells in hygrosensitive sensilla in the second chamber of the sacculus of the antenna third segment (at protein level).

Its subcellular location is the secreted. Its function is as follows. Odorant-binding protein required for hygrotaxis behavior in humidity-detecting sensilla. This chain is Odorant-binding protein 59a, found in Drosophila melanogaster (Fruit fly).